A 209-amino-acid polypeptide reads, in one-letter code: Prolactin (209 aa).

A signal peptide spans 1–24 (MAQRFKGSNLFLTALLCLASQGHA). 2 disulfides stabilise this stretch: Cys-70–Cys-184 and Cys-201–Cys-209.

This sequence belongs to the somatotropin/prolactin family.

The protein localises to the secreted. The sequence is that of Prolactin (prl) from Anguilla japonica (Japanese eel).